The sequence spans 383 residues: MCWISMSQSRFIIKSLFSTAGGFLLGSALSNPPSLATAFSSSSSSSSAAAAVDMETHKTKVCIVGSGPAAHTAAIYASRAELKPLLFEGWMANDIAPGGQLTTTTDVENFPGFPEGILGIDIVEKFRKQSERFGTTIFTETVNKVDFSSKPFKLFTDSRTVLADSVIISTGAVAKRLSFTGSGEGNGGFWNRGISACAVCDGAAPIFRNKPLVVIGGGDSAMEEANFLTKYGSKVYIIHRRDTFRASKIMQQRALSNPKIEVIWNSAVVEAYGDENGRVLGGLKVKNVVTGDVSDLKVSGLFFAIGHEPATKFLDGQLELDEDGYVVTKPGTTKTSVVGVFAAGDVQDKKYRQAITAAGTGCMAALDAEHYLQEIGSQEGKSD.

Residues Ser-66 to Ala-69, Phe-87 to Glu-88, Ile-95 to Gln-100, Asn-109, Val-142, Cys-200, Asp-345, and Arg-352 to Ala-354 contribute to the FAD site. Cys-197 and Cys-200 form a disulfide bridge.

Belongs to the class-II pyridine nucleotide-disulfide oxidoreductase family. Homodimer. FAD serves as cofactor.

It localises to the cytoplasm. The protein localises to the mitochondrion matrix. It carries out the reaction [thioredoxin]-dithiol + NADP(+) = [thioredoxin]-disulfide + NADPH + H(+). Its function is as follows. Possesses thioredoxin-disulfide reductase activity towards thioredoxins O1, O2 and F3. The chain is Thioredoxin reductase 2 (NTR2) from Arabidopsis thaliana (Mouse-ear cress).